We begin with the raw amino-acid sequence, 151 residues long: Large ribosomal subunit protein bL9 (151 aa).

This sequence belongs to the bacterial ribosomal protein bL9 family.

In terms of biological role, binds to the 23S rRNA. The chain is Large ribosomal subunit protein bL9 from Mycolicibacterium vanbaalenii (strain DSM 7251 / JCM 13017 / BCRC 16820 / KCTC 9966 / NRRL B-24157 / PYR-1) (Mycobacterium vanbaalenii).